Here is a 514-residue protein sequence, read N- to C-terminus: MRKKNVLLIVVDQWRADFVPHVLRADGKIDFLKTPNLDRLCREGVTFRNHVTTCVPCGPARASLLTGLYLMNHRAVQNTVPLDQRHLNLGKALRGVGYDPALIGYTTTVPDPRTTSPNDPRFRVLGDLMDGFHPVGAFEPNMEGYFGWVAQNGFDLPEHRPDIWLPEGEDAVAGATDRPSRIPKEFSDSTFFTERALTYLKGRDGKPFFLHLGYYRPHPPFVASAPYHAMYRPEDMPAPIRAANPDIEAAQHPLMKFYVDSIRRGSFFQGAEGSGATLDEAELRQMRATYCGLITEVDDCLGRVFSYLDETGQWDDTLIIFTSDHGEQLGDHHLLGKIGYNDPSFRIPLVIKDAGENARAGAIESGFTESIDVMPTILDWLGGKIPHACDGLSLLPFLSEGRPQDWRTELHYEYDFRDVYYSEPQSFLGLGMNDCSLCVIQDERYKYVHFAALPPLFFDLRHDPNEFTNLADDPAYAALVRDYAQKALSWRLKHADRTLTHYRSGPEGLSERSH.

Residues Asp-12, Cys-57, Asp-324, and His-325 each coordinate Mn(2+). Cys-57 (nucleophile) is an active-site residue. Cys-57 carries the 3-oxoalanine (Cys) modification.

This sequence belongs to the alkaline phosphatase superfamily. Homotetramer. Mn(2+) serves as cofactor. In terms of processing, the conversion to 3-oxoalanine (also known as C-formylglycine, FGly), of a serine or cysteine residue in prokaryotes and of a cysteine residue in eukaryotes, is critical for catalytic activity.

Hydrolytic enzyme with a broad substrate specificity acting on phosphate diesters and phosphonate monoesters. The chain is Multifunctional alkaline phosphatase superfamily protein pRL90232 from Rhizobium johnstonii (strain DSM 114642 / LMG 32736 / 3841) (Rhizobium leguminosarum bv. viciae).